Reading from the N-terminus, the 614-residue chain is Replication protein A 70 kDa DNA-binding subunit (614 aa).

The interval 112-178 is disordered; it reads GNPVPYNEGQ…SSVKTPGGTQ (67 aa). Composition is skewed to polar residues over residues 120–130 and 158–178; these read GQGQQRSSAPT and PSNQ…GGTQ. The segment at residues 194–278 is a DNA-binding region (OB); the sequence is WTICARVTQK…VKNDYEITFN (85 aa). The segment at 478-500 adopts a C4-type zinc-finger fold; sequence CPSQDCNKKVIDQQNGLYRCEKC.

It belongs to the replication factor A protein 1 family. In terms of assembly, component of the heterotrimeric canonical replication protein A complex (RPA).

The protein resides in the nucleus. It is found in the PML body. As part of the heterotrimeric replication protein A complex (RPA/RP-A), binds and stabilizes single-stranded DNA intermediates, that form during DNA replication or upon DNA stress. It prevents their reannealing and in parallel, recruits and activates different proteins and complexes involved in DNA metabolism. Thereby, it plays an essential role both in DNA replication and the cellular response to DNA damage. The polypeptide is Replication protein A 70 kDa DNA-binding subunit (RPA1) (Gallus gallus (Chicken)).